The sequence spans 378 residues: Peptide methionine sulfoxide reductase MsrA/MsrB (378 aa).

Positions 40–197 (QQATLAGGCF…KVRYNYYRYA (158 aa)) are peptide methionine sulfoxide reductase A. Cys-48 is an active-site residue. The 123-residue stretch at 240–362 (DEQIRAKLTS…NSAAMRFIPK (123 aa)) folds into the MsrB domain. Residue Cys-351 is the Nucleophile of the active site.

This sequence in the N-terminal section; belongs to the MsrA Met sulfoxide reductase family. The protein in the C-terminal section; belongs to the MsrB Met sulfoxide reductase family.

The catalysed reaction is L-methionyl-[protein] + [thioredoxin]-disulfide + H2O = L-methionyl-(S)-S-oxide-[protein] + [thioredoxin]-dithiol. It catalyses the reaction [thioredoxin]-disulfide + L-methionine + H2O = L-methionine (S)-S-oxide + [thioredoxin]-dithiol. The enzyme catalyses L-methionyl-[protein] + [thioredoxin]-disulfide + H2O = L-methionyl-(R)-S-oxide-[protein] + [thioredoxin]-dithiol. Has an important function as a repair enzyme for proteins that have been inactivated by oxidation. Catalyzes the reversible oxidation-reduction of methionine sulfoxide in proteins to methionine. This chain is Peptide methionine sulfoxide reductase MsrA/MsrB (msrAB), found in Vibrio cholerae serotype O1 (strain ATCC 39315 / El Tor Inaba N16961).